A 157-amino-acid polypeptide reads, in one-letter code: MKKKANRLDAIKMIISSKEVGSQEELLQELNREGFELTQATLSRDLKQLKVAKAASMNGKYVYVLPNNIMYKRSTDQSAGEMLRNNGFISLQFSGNIAVIRTRPGYASSMAYDIDNNEFSEILGTIAGDDTIMLVLREGVATSKVRQLLSLIIPNIE.

It belongs to the ArgR family.

It localises to the cytoplasm. It functions in the pathway amino-acid biosynthesis; L-arginine biosynthesis [regulation]. Its function is as follows. Regulates arginine biosynthesis genes. The protein is Arginine repressor of Bacteroides thetaiotaomicron (strain ATCC 29148 / DSM 2079 / JCM 5827 / CCUG 10774 / NCTC 10582 / VPI-5482 / E50).